Here is a 74-residue protein sequence, read N- to C-terminus: Mu-conotoxin-like T3.1 (74 aa).

A signal peptide spans 1-19 (MSKLGVLLTICLLLFPLTA). Positions 20–74 (LPMDGDEPADRPAERMQDNISSEQHPLFEERHGCCKGPEGCSSRECRPQHCCGRR) are excised as a propeptide. 3 disulfides stabilise this stretch: cysteine 53/cysteine 65, cysteine 54/cysteine 70, and cysteine 60/cysteine 71. Proline 57 is modified (4-hydroxyproline). A 4-carboxyglutamate mark is found at glutamate 58 and glutamate 64. Proline 67 carries the 4-hydroxyproline modification. Cysteine 71 carries the cysteine amide modification.

This sequence belongs to the conotoxin M superfamily. Expressed by the venom duct.

Its subcellular location is the secreted. Its function is as follows. Mu-conotoxins block voltage-gated sodium channels (Nav). In vitro, this synthetic peptide displays a low blocking effect in mouse extensor digitorum longus muscles (IC(50)=616 nM). In Conus tulipa (Fish-hunting cone snail), this protein is Mu-conotoxin-like T3.1.